Consider the following 224-residue polypeptide: Peroxiredoxin-6 (224 aa).

A Thioredoxin domain is found at 5–169 (LLLGDEAPNF…ILRVVDSLQL (165 aa)). Positions 31–40 (DSWGILFSHP) are required and sufficient for targeting to lysosomes and lamellar bodies. Thr44 is subject to Phosphothreonine. Cys47 (cysteine sulfenic acid (-SOH) intermediate; for peroxidase activity) is an active-site residue. Lys63 carries the post-translational modification N6-acetyllysine. Position 89 is a phosphotyrosine (Tyr89). The For phospholipase activity role is filled by Asp140. Thr177 carries the phosphothreonine; by MAPK modification. At Lys209 the chain carries N6-acetyllysine; alternate. The residue at position 209 (Lys209) is an N6-succinyllysine; alternate.

It belongs to the peroxiredoxin family. Prx6 subfamily. As to quaternary structure, homodimer. Interacts with GSTP1; mediates PRDX6 glutathionylation and regeneration. Interacts with APEX1. Interacts with STH. May interact with FAM168B. May interact with HTR2A. Post-translationally, phosphorylation at Thr-177 by MAP kinases increases the phospholipase activity of the enzyme. Phosphorylated form exhibits a greater lysophosphatidylcholine acyltransferase activity compared to the non-phosphorylated form. Irreversibly inactivated by overoxidation of Cys-47 to sulfinic acid (Cys-SO(2)H) and sulfonic acid (Cys-SO(3)H) forms upon oxidative stress.

It localises to the cytoplasm. The protein resides in the lysosome. The enzyme catalyses a hydroperoxide + 2 glutathione = an alcohol + glutathione disulfide + H2O. It catalyses the reaction a 1,2-diacyl-sn-glycero-3-phosphocholine + H2O = a 1-acyl-sn-glycero-3-phosphocholine + a fatty acid + H(+). It carries out the reaction a 1-acyl-sn-glycero-3-phosphocholine + an acyl-CoA = a 1,2-diacyl-sn-glycero-3-phosphocholine + CoA. The catalysed reaction is 1-hexadecanoyl-sn-glycero-3-phosphocholine + hexadecanoyl-CoA = 1,2-dihexadecanoyl-sn-glycero-3-phosphocholine + CoA. The enzyme catalyses 1,2-dihexadecanoyl-sn-glycero-3-phosphocholine + H2O = 1-hexadecanoyl-sn-glycero-3-phosphocholine + hexadecanoate + H(+). Functionally, thiol-specific peroxidase that catalyzes the reduction of hydrogen peroxide and organic hydroperoxides to water and alcohols, respectively. Can reduce H(2)O(2) and short chain organic, fatty acid, and phospholipid hydroperoxides. Also has phospholipase activity, can therefore either reduce the oxidized sn-2 fatty acyl group of phospholipids (peroxidase activity) or hydrolyze the sn-2 ester bond of phospholipids (phospholipase activity). These activities are dependent on binding to phospholipids at acidic pH and to oxidized phospholipds at cytosolic pH. Plays a role in cell protection against oxidative stress by detoxifying peroxides and in phospholipid homeostasis. Exhibits acyl-CoA-dependent lysophospholipid acyltransferase which mediates the conversion of lysophosphatidylcholine (1-acyl-sn-glycero-3-phosphocholine or LPC) into phosphatidylcholine (1,2-diacyl-sn-glycero-3-phosphocholine or PC). Shows a clear preference for LPC as the lysophospholipid and for palmitoyl CoA as the fatty acyl substrate. The polypeptide is Peroxiredoxin-6 (Prdx6) (Rattus norvegicus (Rat)).